A 315-amino-acid chain; its full sequence is Intradiol ring-cleavage dioxygenase prcA (315 aa).

Fe cation contacts are provided by Tyr-166, Tyr-200, His-224, and His-226. The disordered stretch occupies residues Lys-287–Leu-315. Over residues Arg-304–Leu-315 the composition is skewed to basic and acidic residues.

This sequence belongs to the intradiol ring-cleavage dioxygenase family. As to quaternary structure, homodimer. Fe(3+) is required as a cofactor.

The catalysed reaction is 3,4-dihydroxybenzoate + O2 = 3-carboxy-cis,cis-muconate + 2 H(+). In terms of biological role, intradiol ring-cleavage dioxygenase; part of the benzoic acid degradation pathway also known as the protocatechuic acid pathway. Benzoic acid debradation begins with the conversion of benzoic acid into 4-hydroxybenzoic acid through hydroxylation by the benzoate-4-monooxygenase bphA, and its partner NADPH-cytochrome P450 reductase cprA which act as a mediator in electron donation from NADPH. 4-Hydroxybenzoic acid is then converted into 3,4-dihydroxybenzoic acid (also called protocatechuic acid) by the p-hydroxybenzoate-m-hydroxylase phhA. Protocatechuic acid is converted into 3-carboxy-cis,cis-muconic acid by the intradiol ring-cleavage dioxygenase prcA, which is further metabolized through the 3-oxoadipate pathway to finally enter the tricarboxylic acid cycle (TCA). The polypeptide is Intradiol ring-cleavage dioxygenase prcA (Aspergillus niger (strain ATCC MYA-4892 / CBS 513.88 / FGSC A1513)).